A 476-amino-acid polypeptide reads, in one-letter code: Ribulose bisphosphate carboxylase large chain (476 aa).

Residues Asn-124 and Thr-174 each coordinate substrate. The active-site Proton acceptor is the Lys-176. Lys-178 is a substrate binding site. Lys-202, Asp-204, and Glu-205 together coordinate Mg(2+). Lys-202 carries the post-translational modification N6-carboxylysine. The active-site Proton acceptor is His-295. Residues Arg-296, His-328, and Ser-380 each coordinate substrate.

This sequence belongs to the RuBisCO large chain family. Type I subfamily. As to quaternary structure, heterohexadecamer of 8 large chains and 8 small chains; disulfide-linked. The disulfide link is formed within the large subunit homodimers. It depends on Mg(2+) as a cofactor. Post-translationally, the disulfide bond which can form in the large chain dimeric partners within the hexadecamer appears to be associated with oxidative stress and protein turnover.

It is found in the carboxysome. The catalysed reaction is 2 (2R)-3-phosphoglycerate + 2 H(+) = D-ribulose 1,5-bisphosphate + CO2 + H2O. The enzyme catalyses D-ribulose 1,5-bisphosphate + O2 = 2-phosphoglycolate + (2R)-3-phosphoglycerate + 2 H(+). RuBisCO catalyzes two reactions: the carboxylation of D-ribulose 1,5-bisphosphate, the primary event in carbon dioxide fixation, as well as the oxidative fragmentation of the pentose substrate in the photorespiration process. Both reactions occur simultaneously and in competition at the same active site. In Trichodesmium erythraeum (strain IMS101), this protein is Ribulose bisphosphate carboxylase large chain.